The primary structure comprises 325 residues: Solute-binding protein Bpro_4736 (325 aa).

The signal sequence occupies residues 1–27 (MKTRTLKVLKPTLALLLAASFSAGALA). 168-173 (RISPVY) contacts phenylglyoxylate.

Belongs to the bacterial solute-binding protein 7 family. The complex is comprised of an extracytoplasmic solute-binding protein and a heteromeric permease formed by two transmembrane proteins.

Its subcellular location is the periplasm. In terms of biological role, solute-binding protein that binds phenylglyoxylate (in vitro). Probably part of a tripartite ATP-independent periplasmic (TRAP) transport system that mediates solute transport into the cytoplasm. This chain is Solute-binding protein Bpro_4736, found in Polaromonas sp. (strain JS666 / ATCC BAA-500).